The chain runs to 85 residues: U4-theraphotoxin-Hhn1a (85 aa).

The first 22 residues, 1–22 (MKVTLIAILTCAAVLVLRTTAA), serve as a signal peptide directing secretion. Residues 23–48 (EELEAESQLMEVGMPDTELAAVDEER) constitute a propeptide that is removed on maturation. 3 disulfides stabilise this stretch: Cys-52–Cys-66, Cys-56–Cys-77, and Cys-71–Cys-82.

Belongs to the neurotoxin 12 (Hwtx-2) family. 02 (Hwtx-2) subfamily. Monomer. Expressed by the venom gland.

The protein resides in the secreted. Functionally, neurotoxin active on both insects and mammals. The protein is U4-theraphotoxin-Hhn1a of Cyriopagopus hainanus (Chinese bird spider).